Reading from the N-terminus, the 136-residue chain is Cyclase aurE (136 aa).

This sequence belongs to the aurE cyclase family.

It participates in polyketide biosynthesis. In terms of biological role, cyclase; part of the gene cluster that mediates the biosynthesis of aurovertins, fungal polyketides that exhibit potent inhibition of adenosine triphosphate synthase. Tha biosynthesis starts with the HR-PKS aurA that selects propionate as the starter unit; synthesizes a hexa-ene chain through the repeated functions of the KR and DH domains in the first six iterations; selectively introduces three alpha-methyl substitutions at C4, C6, and C16 using the S-adensylmethionine-dependent cMET; and shuts off KR and DH in the last three iterations to afford a 1,3,5-triketo portion that can undergo intramolecular cyclization to yield the alpha-pyrone intermediate. AurE may act as a cyclase and enhances the rate of pyrone formation and product release of aurA. The methyltransferase aurB then methylates the C17 hydroxyl group. C17 methylation is required to initiate epoxidation by the downstream monooxygenase aurC. The monooxygenase aurC and the epoxide hydrolase aurD can iteratively transform the terminal triene portion of the methylated precursor into the dioxabicyclo[3.2.1]octane scaffold of aurovertin E. Epoxidation modifications of the precursor occur in two separate steps; bis-epoxidation of the two terminal olefins takes place first, followed by another epoxidation that occurs at C7-C8 after tetrahydrofuran formation. The O-acyltransferase aurG converts aurovertin E to aurovertin A. This chain is Cyclase aurE, found in Calcarisporium arbuscula (Dendryphion arbuscula).